The chain runs to 760 residues: Transmembrane channel-like protein 1 (760 aa).

The disordered stretch occupies residues 1–80 (MSPKKVQIKV…RRRRLKRGAE (80 aa)). Over 1 to 182 (MSPKKVQIKV…KIKAIESQFG (182 aa)) the chain is Cytoplasmic. Residues 13–29 (KEDETEESSSEEEEEVE) are compositionally biased toward acidic residues. Positions 30-39 (DKLPRRESLR) are enriched in basic and acidic residues. Ser37 bears the Phosphoserine mark. Position 45 is a phosphothreonine (Thr45). The span at 50 to 61 (NEDDPEPEPEDE) shows a compositional bias: acidic residues. A Phosphoserine modification is found at Ser128. A helical membrane pass occupies residues 183–220 (SSVASYFLFLRWMYGVNMVLFILTFSLIMLPEYLWGLP). Residues 221–271 (YGSLPRKTVPRAEEASAANFGVLYDFNGLAQYSVLFYGYYDNKRTIGWMNF) lie on the Extracellular side of the membrane. The helical transmembrane segment at 272–303 (RLPLSYFLVGIMCIGYSFLVVLKAMTKNIGDD) threads the bilayer. The Cytoplasmic portion of the chain corresponds to 304–359 (GGGDDNTFNFSWKVFTSWDYLIGNPETADNKFNSITMNFKEAITEEKAAQVEENVH). Ser314 carries the phosphoserine modification. Residues 360–390 (LIRFLRFLANFFVFLTLGGSGYLIFWAVKRS) form a helical membrane-spanning segment. At 391-402 (QEFAQQDPDTLG) the chain is on the extracellular side. Residue Thr400 is modified to Phosphothreonine. The chain crosses the membrane as a helical span at residues 403 to 430 (WWEKNEMNMVMSLLGMFCPTLFDLFAEL). Over 431–434 (EDYH) the chain is Cytoplasmic. The chain crosses the membrane as a helical span at residues 435 to 469 (PLIALKWLLGRIFALLLGNLYVFILALMDEINNKI). The Extracellular segment spans residues 470–515 (EEEKLVKANITLWEANMIKAYNASFSENSTGPPFFVHPADVPRGPC). A helical transmembrane segment spans residues 516–553 (WETMVGQEFVRLTVSDVLTTYVTILIGDFLRACFVRFC). The Cytoplasmic segment spans residues 554–572 (NYCWCWDLEYGYPSYTEFD). Residues 573 to 593 (ISGNVLALIFNQGMIWMGSFF) traverse the membrane as a helical segment. Residues 594–596 (APS) lie on the Extracellular side of the membrane. The helical transmembrane segment at 597-619 (LPGINILRLHTSMYFQCWAVMCC) threads the bilayer. Topologically, residues 620-633 (NVPEARVFKASRSN) are cytoplasmic. A helical membrane pass occupies residues 634–657 (NFYLGMLLLILFLSTMPVLYMIVS). The Extracellular portion of the chain corresponds to 658–700 (LPPSFDCGPFSGKNRMFEVIGETLEHDFPSWMAKILRQLSNPG). A helical transmembrane segment spans residues 701–734 (LVIAVILVMVLAIYYLNATAKGQKAANLDLKKKM). Residues 735 to 760 (KMQALENKMRNKKMAAARAAAAAGRQ) lie on the Cytoplasmic side of the membrane.

It belongs to the TMC family. In terms of assembly, forms the MET channel complosed of TMC dimer (TMC1 or TMC2), TMIE, TOMT, CIB (CIB2 or CIB3), LHFPL5 and PDH15. The interaction of TMC1 and TMC2 with TOMT is required for the transportation of TMC1/2 into the stereocilia of hair cells. Interacts (via N-terminus) with both isoforms CD1 and CD3 of PCDH15. Can form a heterodimer with TMC2, TMC5 or TMC7. As to expression, detected in fetal cochlea, and at low levels in placenta and testis.

The protein localises to the cell membrane. It catalyses the reaction Ca(2+)(in) = Ca(2+)(out). Its function is as follows. Pore-forming subunit of the mechanotransducer (MET) non-selective cation channel complex located at the tips of stereocilia of cochlear hair cells and that mediates sensory transduction in the auditory system. The MET complex is composed of two dimeric pore-forming ion-conducting transmembrane TMC (TMC1 or TMC2) subunits, and aided by several auxiliary proteins including LHFPL5, TMIE, CIB2/3 and TOMT, and the tip-link PCDH15. MET channel is activated by tension in the tip-link extending from the side wall of one stereocilium to the tip of the adjacent shorter stereocilium, where the channel is located. TMC1 MET channel is highly permeable to calcium and likely transports monovalent cations. Also involved in vestibular hair cells transduction current. This Homo sapiens (Human) protein is Transmembrane channel-like protein 1.